The sequence spans 377 residues: DNA replication and repair protein RecF (377 aa).

An ATP-binding site is contributed by 30–37 (GQNAQGKS).

The protein belongs to the RecF family.

It localises to the cytoplasm. In terms of biological role, the RecF protein is involved in DNA metabolism; it is required for DNA replication and normal SOS inducibility. RecF binds preferentially to single-stranded, linear DNA. It also seems to bind ATP. In Cyanothece sp. (strain PCC 7425 / ATCC 29141), this protein is DNA replication and repair protein RecF.